The sequence spans 354 residues: Uroporphyrinogen decarboxylase (354 aa).

Residues 25–29 (RQAGR), aspartate 75, tyrosine 152, threonine 207, and histidine 330 contribute to the substrate site.

Belongs to the uroporphyrinogen decarboxylase family. In terms of assembly, homodimer.

It localises to the cytoplasm. It catalyses the reaction uroporphyrinogen III + 4 H(+) = coproporphyrinogen III + 4 CO2. The protein operates within porphyrin-containing compound metabolism; protoporphyrin-IX biosynthesis; coproporphyrinogen-III from 5-aminolevulinate: step 4/4. Catalyzes the decarboxylation of four acetate groups of uroporphyrinogen-III to yield coproporphyrinogen-III. This Xanthomonas campestris pv. campestris (strain 8004) protein is Uroporphyrinogen decarboxylase.